A 366-amino-acid polypeptide reads, in one-letter code: Ribosomal RNA large subunit methyltransferase M (366 aa).

S-adenosyl-L-methionine is bound by residues serine 188, 221-224 (CPGG), aspartate 240, aspartate 260, and aspartate 277. Lysine 306 acts as the Proton acceptor in catalysis.

The protein belongs to the class I-like SAM-binding methyltransferase superfamily. RNA methyltransferase RlmE family. RlmM subfamily. In terms of assembly, monomer.

The protein resides in the cytoplasm. The catalysed reaction is cytidine(2498) in 23S rRNA + S-adenosyl-L-methionine = 2'-O-methylcytidine(2498) in 23S rRNA + S-adenosyl-L-homocysteine + H(+). Catalyzes the 2'-O-methylation at nucleotide C2498 in 23S rRNA. The sequence is that of Ribosomal RNA large subunit methyltransferase M from Salmonella newport (strain SL254).